The primary structure comprises 363 residues: tRNA-specific 2-thiouridylase MnmA (363 aa).

Residues 6-13 (AMSGGVDS) and leucine 32 contribute to the ATP site. Cysteine 101 acts as the Nucleophile in catalysis. A disulfide bond links cysteine 101 and cysteine 193. ATP is bound at residue glycine 125. The interaction with tRNA stretch occupies residues 143-145 (KDQ). Residue cysteine 193 is the Cysteine persulfide intermediate of the active site.

This sequence belongs to the MnmA/TRMU family.

Its subcellular location is the cytoplasm. The catalysed reaction is S-sulfanyl-L-cysteinyl-[protein] + uridine(34) in tRNA + AH2 + ATP = 2-thiouridine(34) in tRNA + L-cysteinyl-[protein] + A + AMP + diphosphate + H(+). In terms of biological role, catalyzes the 2-thiolation of uridine at the wobble position (U34) of tRNA, leading to the formation of s(2)U34. The chain is tRNA-specific 2-thiouridylase MnmA from Mycobacterium marinum (strain ATCC BAA-535 / M).